We begin with the raw amino-acid sequence, 364 residues long: RNA polymerase sigma factor SigA (364 aa).

The sigma-70 factor domain-2 stretch occupies residues 132 to 202; sequence LAEANLRLVV…TRAIADQART (71 aa). Positions 156 to 159 match the Interaction with polymerase core subunit RpoC motif; that stretch reads DLIQ. The interval 211–287 is sigma-70 factor domain-3; it reads ETINKLIRVQ…DDVIESPVDY (77 aa). The sigma-70 factor domain-4 stretch occupies residues 300–353; it reads VMDTLTDREENVLRMRFGLDDGRMHTLEDVGKQFKVTRERIRQIEAKAIKKLRH. Positions 326–345 form a DNA-binding region, H-T-H motif; it reads LEDVGKQFKVTRERIRQIEA.

This sequence belongs to the sigma-70 factor family. RpoD/SigA subfamily. Interacts transiently with the RNA polymerase catalytic core.

The protein localises to the cytoplasm. Its function is as follows. Sigma factors are initiation factors that promote the attachment of RNA polymerase to specific initiation sites and are then released. This sigma factor is the primary sigma factor during exponential growth. This is RNA polymerase sigma factor SigA from Lactococcus lactis subsp. cremoris (Streptococcus cremoris).